The sequence spans 218 residues: Redox-sensing transcriptional repressor Rex (218 aa).

The segment at residues 18-57 (LYYRFIQSLHASGKQRVSSAELSEAVKVDSATIRRDFSYF) is a DNA-binding region (H-T-H motif). 92–97 (GVGHLG) lines the NAD(+) pocket.

It belongs to the transcriptional regulatory Rex family. In terms of assembly, homodimer.

The protein localises to the cytoplasm. Modulates transcription in response to changes in cellular NADH/NAD(+) redox state. The polypeptide is Redox-sensing transcriptional repressor Rex (Exiguobacterium sp. (strain ATCC BAA-1283 / AT1b)).